We begin with the raw amino-acid sequence, 398 residues long: MEEYQHDNSTTPQRVSFLYSPISSSNKNDNTSDTNNNNNNNNSSNYGPGYNNTNNNNHHHQHMLFPHMSSLLPQTTENCFRSDHDQPNNNNNPSVKSEASSSRINHYSMLMRAIHNTQEANNNNNDNVSDVEAMKAKIIAHPHYSTLLQAYLDCQKIGAPPDVVDRITAARQDFEARQQRSTPSVSASSRDPELDQFMEAYCDMLVKYREELTRPIQEAMEFIRRIESQLSMLCQSPIHILNNPDGKSDNMGSSDEEQENNSGGETELPEIDPRAEDRELKNHLLKKYSGYLSSLKQELSKKKKKGKLPKEARQKLLTWWELHYKWPYPSESEKVALAESTGLDQKQINNWFINQRKRHWKPSEDMQFMVMDGLQHPHHAALYMDGHYMGDGPYRLGP.

3 disordered regions span residues 20–61 (SPIS…HHHQ), 78–102 (NCFR…ASSS), and 241–273 (LNNP…EIDP). The span at 23 to 56 (SSSNKNDNTSDTNNNNNNNNSSNYGPGYNNTNNN) shows a compositional bias: low complexity. A compositionally biased stretch (polar residues) spans 87 to 102 (PNNNNNPSVKSEASSS). In terms of domain architecture, ELK spans 279–299 (ELKNHLLKKYSGYLSSLKQEL). The segment at residues 300–363 (SKKKKKGKLP…NQRKRHWKPS (64 aa)) is a DNA-binding region (homeobox; TALE-type).

It belongs to the TALE/KNOX homeobox family. May form heterodimeric complex with the TALE/BELL proteins BEL1, BLH2, BLH8/PNF and BLH9/PNY. Interacts with OFP1, OFP2, OFP4, OFP6 and OFP12. Interacts with CCT7 and CCT8. Interacts with KNATM-B. Binds to AGO10/PNH. Interacts with BZIP30. Expressed in the vegetative meristem. Present in the base of flower primordia.

It is found in the nucleus. Functionally, may play a role in meristem function, and may be involved in maintaining cells in an undifferentiated, meristematic state, and its expression disappears at the same time the shoot apex undergoes the transition from vegetative to reproductive development. Positive regulator of LATERAL ORGAN BOUNDARIES (LOB). Probably binds to the DNA sequence 5'-TGAC-3'. Able to traffic from the L1 to the L2/L3 layers of the meristem, presumably through plasmodesmata. This Arabidopsis thaliana (Mouse-ear cress) protein is Homeobox protein knotted-1-like 1 (KNAT1).